Consider the following 381-residue polypeptide: Heme A synthase (381 aa).

Residues 1-23 (MARRPVFQEVTETTPPGTTPSGG) are disordered. Low complexity predominate over residues 11 to 23 (TETTPPGTTPSGG). Helical transmembrane passes span 34–54 (GAIR…IALG), 120–140 (RLLG…FLAT), 151–171 (LLLL…MVHS), 185–205 (LATH…YVLA), 228–248 (TTGL…VAGI), 285–305 (LVQF…VVVF), 319–339 (AYVA…MNVL), and 342–362 (SPLP…TLIL). Histidine 290 is a binding site for heme. Histidine 350 provides a ligand contact to heme.

This sequence belongs to the COX15/CtaA family. Type 2 subfamily. Interacts with CtaB. Requires heme b as cofactor.

The protein localises to the cell membrane. It catalyses the reaction Fe(II)-heme o + 2 A + H2O = Fe(II)-heme a + 2 AH2. The protein operates within porphyrin-containing compound metabolism; heme A biosynthesis; heme A from heme O: step 1/1. Its function is as follows. Catalyzes the conversion of heme O to heme A by two successive hydroxylations of the methyl group at C8. The first hydroxylation forms heme I, the second hydroxylation results in an unstable dihydroxymethyl group, which spontaneously dehydrates, resulting in the formyl group of heme A. The sequence is that of Heme A synthase from Paracoccus denitrificans (strain Pd 1222).